We begin with the raw amino-acid sequence, 281 residues long: Cytochrome c oxidase subunit 3 (281 aa).

7 helical membrane-spanning segments follow: residues 34 to 54 (PWPIAVSFSLLVVTLSGVMTF), 59 to 79 (NGLFLLTLGFISLVSTMTLWF), 103 to 123 (GFVLFVVSEVFFFISIFWAFF), 148 to 168 (WEVPLLNTVILLSSGATVTYA), 179 to 199 (VIYGLIATIVLATVFTGFQGF), 220 to 240 (ATGFHGIHVLVGTIFLTVGLF), and 259 to 279 (ILYWHFVDVVWLFLFISVYWW).

This sequence belongs to the cytochrome c oxidase subunit 3 family. As to quaternary structure, component of the cytochrome c oxidase (complex IV, CIV), a multisubunit enzyme composed of a catalytic core of 3 subunits and several supernumerary subunits. The complex exists as a monomer or a dimer and forms supercomplexes (SCs) in the inner mitochondrial membrane with ubiquinol-cytochrome c oxidoreductase (cytochrome b-c1 complex, complex III, CIII).

The protein localises to the mitochondrion inner membrane. The enzyme catalyses 4 Fe(II)-[cytochrome c] + O2 + 8 H(+)(in) = 4 Fe(III)-[cytochrome c] + 2 H2O + 4 H(+)(out). Functionally, component of the cytochrome c oxidase, the last enzyme in the mitochondrial electron transport chain which drives oxidative phosphorylation. The respiratory chain contains 3 multisubunit complexes succinate dehydrogenase (complex II, CII), ubiquinol-cytochrome c oxidoreductase (cytochrome b-c1 complex, complex III, CIII) and cytochrome c oxidase (complex IV, CIV), that cooperate to transfer electrons derived from NADH and succinate to molecular oxygen, creating an electrochemical gradient over the inner membrane that drives transmembrane transport and the ATP synthase. Cytochrome c oxidase is the component of the respiratory chain that catalyzes the reduction of oxygen to water. Electrons originating from reduced cytochrome c in the intermembrane space (IMS) are transferred via the dinuclear copper A center (CU(A)) of subunit 2 and heme A of subunit 1 to the active site in subunit 1, a binuclear center (BNC) formed by heme A3 and copper B (CU(B)). The BNC reduces molecular oxygen to 2 water molecules using 4 electrons from cytochrome c in the IMS and 4 protons from the mitochondrial matrix. The protein is Cytochrome c oxidase subunit 3 (COX3) of Rhizopus stolonifer (Rhizopus nigricans).